A 426-amino-acid chain; its full sequence is Glutamate-1-semialdehyde 2,1-aminomutase (426 aa).

At lysine 265 the chain carries N6-(pyridoxal phosphate)lysine.

The protein belongs to the class-III pyridoxal-phosphate-dependent aminotransferase family. HemL subfamily. In terms of assembly, homodimer. It depends on pyridoxal 5'-phosphate as a cofactor.

The protein resides in the cytoplasm. It carries out the reaction (S)-4-amino-5-oxopentanoate = 5-aminolevulinate. The protein operates within porphyrin-containing compound metabolism; protoporphyrin-IX biosynthesis; 5-aminolevulinate from L-glutamyl-tRNA(Glu): step 2/2. The polypeptide is Glutamate-1-semialdehyde 2,1-aminomutase (Salmonella agona (strain SL483)).